We begin with the raw amino-acid sequence, 467 residues long: ATP synthase subunit beta (467 aa).

Residue 150–157 (GGAGVGKT) coordinates ATP.

The protein belongs to the ATPase alpha/beta chains family. F-type ATPases have 2 components, CF(1) - the catalytic core - and CF(0) - the membrane proton channel. CF(1) has five subunits: alpha(3), beta(3), gamma(1), delta(1), epsilon(1). CF(0) has three main subunits: a(1), b(2) and c(9-12). The alpha and beta chains form an alternating ring which encloses part of the gamma chain. CF(1) is attached to CF(0) by a central stalk formed by the gamma and epsilon chains, while a peripheral stalk is formed by the delta and b chains.

It localises to the cell inner membrane. The enzyme catalyses ATP + H2O + 4 H(+)(in) = ADP + phosphate + 5 H(+)(out). Functionally, produces ATP from ADP in the presence of a proton gradient across the membrane. The catalytic sites are hosted primarily by the beta subunits. The chain is ATP synthase subunit beta from Aliivibrio salmonicida (strain LFI1238) (Vibrio salmonicida (strain LFI1238)).